We begin with the raw amino-acid sequence, 87 residues long: Small ribosomal subunit protein bS20 (87 aa).

Residues 1-11 (MANHKSALKRI) show a composition bias toward basic residues. Residues 1–23 (MANHKSALKRIKQTEKRTERNRH) are disordered.

The protein belongs to the bacterial ribosomal protein bS20 family.

Its function is as follows. Binds directly to 16S ribosomal RNA. The chain is Small ribosomal subunit protein bS20 from Geotalea daltonii (strain DSM 22248 / JCM 15807 / FRC-32) (Geobacter daltonii).